Here is a 338-residue protein sequence, read N- to C-terminus: CRISPR system Cmr subunit Cmr1-1 (338 aa).

Belongs to the CRISPR system Cmr1 family. Part of the type III-B Cmr ribonucleoprotein (RNP) complex, an elongated RNP with Cmr2 and Cmr3 as the base, with Cmr4 and Cmr5 forming a helical core along the mature crRNA (39 or 45 nt in length), while the complex is capped by Cmr6 and Cmr1. The 5' end of the crRNA is bound to Cmr2 and Cmr3, while Cmr6 and a Cmr1 subunit (Cmr1-1 or Cmr1-2) cap the 3' end of the crRNA. The target RNA lies antiparallel to the crRNA, with its 5' end near Cmr1 and Cmr6 and its 3' end near Cmr2 and Cmr3; major target cleavage occurs nears the junction of Cmr1/Cmr6 and Cmr4/Cmr, with minor cleavage occurring at 6 nt intervals which coincide with the proposed spacing of Cmr4 subunits.

It is found in the cytoplasm. Functionally, CRISPR (clustered regularly interspaced short palindromic repeat), is an adaptive immune system that provides protection against mobile genetic elements (viruses, transposable elements and conjugative plasmids). CRISPR clusters contain sequences complementary to antecedent mobile elements and target invading nucleic acids. CRISPR clusters are transcribed and processed into CRISPR RNA (crRNA), formerly called psiRNA (prokaryotic silencing) in this organism. Part of the Cmr ribonucleoprotein complex which has divalent cation-dependent endoribonuclease activity specific for ssRNA complementary to the crRNA (target RNA), generating 5' hydroxy- and 3' phosphate or 2'-3' cyclic phosphate termini. Cmr4 is probably the subunit that cleaves target RNA. Cmr complex does not cleave ssDNA complementary to the crRNA. Cleavage of invading RNA is guided by the crRNA; substrate cleavage occurs a fixed distance (14 nt) from the 3' end of the crRNA. In vitro reconstitution shows Cmr1-2 and Cmr5 are not absolutely necessary for target cleavage. The chain is CRISPR system Cmr subunit Cmr1-1 from Pyrococcus furiosus (strain ATCC 43587 / DSM 3638 / JCM 8422 / Vc1).